The primary structure comprises 257 residues: Large ribosomal subunit protein uL3 (257 aa).

Residues 232–257 (LKAPKKQKTKVETNQVNPKIEEEKTK) are disordered.

Belongs to the universal ribosomal protein uL3 family. Part of the 50S ribosomal subunit. Forms a cluster with proteins L14 and L19.

In terms of biological role, one of the primary rRNA binding proteins, it binds directly near the 3'-end of the 23S rRNA, where it nucleates assembly of the 50S subunit. This is Large ribosomal subunit protein uL3 from Mycoplasma genitalium (strain ATCC 33530 / DSM 19775 / NCTC 10195 / G37) (Mycoplasmoides genitalium).